Reading from the N-terminus, the 308-residue chain is Ribosomal RNA small subunit methyltransferase H (308 aa).

Residues glycine 36–histidine 38, aspartate 55, phenylalanine 86, aspartate 103, and glutamine 110 each bind S-adenosyl-L-methionine.

This sequence belongs to the methyltransferase superfamily. RsmH family.

It is found in the cytoplasm. It carries out the reaction cytidine(1402) in 16S rRNA + S-adenosyl-L-methionine = N(4)-methylcytidine(1402) in 16S rRNA + S-adenosyl-L-homocysteine + H(+). Its function is as follows. Specifically methylates the N4 position of cytidine in position 1402 (C1402) of 16S rRNA. The chain is Ribosomal RNA small subunit methyltransferase H from Helicobacter pylori (strain B38).